Reading from the N-terminus, the 213-residue chain is Probable transaldolase (213 aa).

K83 acts as the Schiff-base intermediate with substrate in catalysis.

Belongs to the transaldolase family. Type 3B subfamily.

It is found in the cytoplasm. The enzyme catalyses D-sedoheptulose 7-phosphate + D-glyceraldehyde 3-phosphate = D-erythrose 4-phosphate + beta-D-fructose 6-phosphate. It functions in the pathway carbohydrate degradation; pentose phosphate pathway; D-glyceraldehyde 3-phosphate and beta-D-fructose 6-phosphate from D-ribose 5-phosphate and D-xylulose 5-phosphate (non-oxidative stage): step 2/3. Its function is as follows. Transaldolase is important for the balance of metabolites in the pentose-phosphate pathway. The polypeptide is Probable transaldolase (Geobacillus kaustophilus (strain HTA426)).